A 453-amino-acid chain; its full sequence is Protein IVY1 (453 aa).

Residues 1–16 are compositionally biased toward polar residues; sequence MPDNNTEQLQGSPSSD. The segment at 1–20 is disordered; it reads MPDNNTEQLQGSPSSDQRLR. 3 positions are modified to phosphoserine: serine 59, serine 84, and serine 85. Coiled coils occupy residues 102–122 and 230–257; these read KRDV…SNAY and IRNL…KHDF. 2 disordered regions span residues 316-340 and 353-453; these read DGPY…EETG and TSQP…SSNI. At serine 335 the chain carries Phosphoserine. Over residues 353-371 the composition is skewed to low complexity; that stretch reads TSQPSTSKTSLPKSKGSST. Polar residues-rich tracts occupy residues 372–384 and 404–429; these read VSTP…SSNK and LMGT…TFKQ. Residues 431–442 show a composition bias toward basic and acidic residues; sequence SIKEDNDNHSSD. Residues 443-453 are compositionally biased toward polar residues; the sequence is TDGMQDQSSNI.

Homomultimer. Interacts with YPT7 and VPS33.

Its subcellular location is the vacuole membrane. Its function is as follows. May be required for vacuolar fusion. Overexpression leads to fragmentation of vacuoles, missorting of the vacuolar enzyme carboxypeptidase Y (CPY) to the exterior of the cell and accumulation of multivesicular bodies inside the cell. This Saccharomyces cerevisiae (strain ATCC 204508 / S288c) (Baker's yeast) protein is Protein IVY1 (IVY1).